The following is a 398-amino-acid chain: Tryptophan synthase beta chain (398 aa).

An N6-(pyridoxal phosphate)lysine modification is found at Lys-88.

Belongs to the TrpB family. As to quaternary structure, tetramer of two alpha and two beta chains. It depends on pyridoxal 5'-phosphate as a cofactor.

It catalyses the reaction (1S,2R)-1-C-(indol-3-yl)glycerol 3-phosphate + L-serine = D-glyceraldehyde 3-phosphate + L-tryptophan + H2O. It functions in the pathway amino-acid biosynthesis; L-tryptophan biosynthesis; L-tryptophan from chorismate: step 5/5. Its function is as follows. The beta subunit is responsible for the synthesis of L-tryptophan from indole and L-serine. The polypeptide is Tryptophan synthase beta chain (Histophilus somni (strain 2336) (Haemophilus somnus)).